A 185-amino-acid polypeptide reads, in one-letter code: Ribosome-recycling factor (185 aa).

This sequence belongs to the RRF family.

It is found in the cytoplasm. In terms of biological role, responsible for the release of ribosomes from messenger RNA at the termination of protein biosynthesis. May increase the efficiency of translation by recycling ribosomes from one round of translation to another. The sequence is that of Ribosome-recycling factor from Pseudomonas fluorescens (strain ATCC BAA-477 / NRRL B-23932 / Pf-5).